Reading from the N-terminus, the 364-residue chain is Protein IncC (364 aa).

Basic and acidic residues-rich tracts occupy residues 1-10 (MGVIHEETAY), 26-42 (ADHRDSAGRLSRWEATG), and 89-100 (HRPEVGSGRQEK). 2 disordered regions span residues 1–63 (MGVI…ASRV) and 75–102 (VRAGNGGSAGTSGVHRPEVGSGRQEKTG).

It belongs to the ParA family.

This is one of the proteins encoded by the trfB operon; it is involved in plasmid maintenance and replication. The sequence is that of Protein IncC (incC) from Escherichia coli.